Consider the following 633-residue polypeptide: Heterogeneous nuclear ribonucleoprotein R (633 aa).

A disordered region spans residues 1 to 24 (MANQVNGNAVQLKEEEEPMDTSSV). N-acetylalanine is present on alanine 2. Residues lysine 13 and lysine 171 each participate in a glycyl lysine isopeptide (Lys-Gly) (interchain with G-Cter in SUMO2) cross-link. RRM domains are found at residues 165 to 244 (TEVF…ISVA), 246 to 328 (NRLF…WADP), and 341 to 411 (KVLF…LAKP). Lysine 359 is covalently cross-linked (Glycyl lysine isopeptide (Lys-Gly) (interchain with G-Cter in SUMO2)). Position 366 is an N6-acetyllysine (lysine 366). Positions 412–418 (PDKKRKE) match the Nuclear localization signal motif. Residues 412 to 456 (PDKKRKERQAARQASRSTAYEDYYYHPPPRMPPPIRGRGRGGGRG) are disordered. The segment covering 437–446 (HPPPRMPPPI) has biased composition (pro residues). Positions 447–567 (RGRGRGGGRG…SRGSRGNRGG (121 aa)) are RNA-binding RGG-box. The stretch at 462–471 (PDYYGYEDYY) is one 1; approximate repeat. A 3 X 11 AA approximate repeats of D-D-Y-Y-G-Y-D-Y-H-D-Y region spans residues 462–497 (PDYYGYEDYYDDYYGYDYHDYRGGYEDPYYGYDDGY). Residues 472 to 482 (DDYYGYDYHDY) form repeat 2. Residues 488 to 497 (DPYYGYDDGY) form a 3; approximate repeat. Residues 501 to 510 (GRGGGRGGRG) are compositionally biased toward gly residues. Residues 501-633 (GRGGGRGGRG…YQDTYGQQWK (133 aa)) form a disordered region. Positions 511 to 524 (APPPPRGRGAPPPR) are enriched in pro residues. Positions 525-541 (GRAGYSQRGAPLGPPRG) are enriched in low complexity. Positions 558 to 570 (SRGSRGNRGGNVG) are enriched in gly residues. The span at 588-604 (TNNQQNWGSQPIAQQPL) shows a compositional bias: polar residues. Low complexity predominate over residues 605 to 621 (QQGGDYSGNYGYNNDNQ). Positions 622–633 (EFYQDTYGQQWK) are enriched in polar residues.

Identified in the spliceosome C complex. Identified in a IGF2BP1-dependent mRNP granule complex containing untranslated mRNAs. Interacts with GTPBP1.

It is found in the nucleus. Its subcellular location is the microsome. It localises to the nucleoplasm. The protein resides in the cytoplasm. In terms of biological role, component of ribonucleosomes, which are complexes of at least 20 other different heterogeneous nuclear ribonucleoproteins (hnRNP). hnRNP play an important role in processing of precursor mRNA in the nucleus. This is Heterogeneous nuclear ribonucleoprotein R (HNRNPR) from Homo sapiens (Human).